The primary structure comprises 530 residues: uncharacterized protein (530 aa).

Residues 362 to 408 form a disordered region; it reads NLTPKLNKTNEDIKSDSTSQPQGFPEGNRRVMENPETKVSKTDDEEM. A compositionally biased stretch (basic and acidic residues) spans 388–403; the sequence is GNRRVMENPETKVSKT.

This sequence belongs to the IIV-6 030L family.

This is an uncharacterized protein from Invertebrate iridescent virus 6 (IIV-6).